Here is a 161-residue protein sequence, read N- to C-terminus: Allophycocyanin beta chain (161 aa).

Residue Asn-71 is modified to N4-methylasparagine. (2R,3E)-phycocyanobilin is bound at residue Cys-81.

This sequence belongs to the phycobiliprotein family. In terms of assembly, heterodimer of an alpha and a beta chain. Post-translationally, contains one covalently linked phycocyanobilin chromophore.

Its subcellular location is the cellular thylakoid membrane. In terms of biological role, light-harvesting photosynthetic bile pigment-protein from the phycobiliprotein complex. Allophycocyanin has a maximum absorption at approximately 650 nanometers. This is Allophycocyanin beta chain (apcB) from Synechocystis sp. (strain PCC 6714) (Aphanocapsa sp. (strain PCC 6714)).